A 249-amino-acid chain; its full sequence is MLYKSSLKNKKRIQKENLRHIAIIMDGNGRWAEKRGKIRTLGHKEGFKTARKIIKYAVENNIKILTLYVFSRENWRRPKLEITALMKLFFFALKSEIKNLNKYNIRLKIIGDTSPFNENLKNYIHKVEKQTFNNTGLILNIAANYSGRWDIIRGIKKIIKDVQKDVLDIDQIQERNFSQYLSTSELLPVDLVIRTGGEKRISNFLLWQIAYSELYFTDILWPDFNWRDFQHAIDYFFTRERRFGGISIS.

The active site involves aspartate 26. Aspartate 26 lines the Mg(2+) pocket. Residues 27 to 30 (GNGR), tryptophan 31, arginine 39, histidine 43, and 71 to 73 (SRE) contribute to the substrate site. Asparagine 74 serves as the catalytic Proton acceptor. Substrate contacts are provided by residues tryptophan 75, arginine 77, arginine 194, and 200-202 (RIS). Mg(2+) is bound at residue glutamate 213.

Belongs to the UPP synthase family. In terms of assembly, homodimer. The cofactor is Mg(2+).

The catalysed reaction is 8 isopentenyl diphosphate + (2E,6E)-farnesyl diphosphate = di-trans,octa-cis-undecaprenyl diphosphate + 8 diphosphate. Catalyzes the sequential condensation of isopentenyl diphosphate (IPP) with (2E,6E)-farnesyl diphosphate (E,E-FPP) to yield (2Z,6Z,10Z,14Z,18Z,22Z,26Z,30Z,34E,38E)-undecaprenyl diphosphate (di-trans,octa-cis-UPP). UPP is the precursor of glycosyl carrier lipid in the biosynthesis of bacterial cell wall polysaccharide components such as peptidoglycan and lipopolysaccharide. This Buchnera aphidicola subsp. Schizaphis graminum (strain Sg) protein is Ditrans,polycis-undecaprenyl-diphosphate synthase ((2E,6E)-farnesyl-diphosphate specific).